A 609-amino-acid chain; its full sequence is Probable translation initiation factor IF-2 (609 aa).

Residues 12–230 (LRQPIVAVLG…VLAGLAQRYM (219 aa)) enclose the tr-type G domain. Residues 21–28 (GHVDHGKT) form a G1 region. 21–28 (GHVDHGKT) provides a ligand contact to GTP. The G2 stretch occupies residues 46-50 (QITQH). The interval 86–89 (DTPG) is G3. GTP-binding positions include 86–90 (DTPGH) and 140–143 (NKID). The tract at residues 140-143 (NKID) is G4. The segment at 208–210 (SAK) is G5.

Belongs to the TRAFAC class translation factor GTPase superfamily. Classic translation factor GTPase family. IF-2 subfamily.

Function in general translation initiation by promoting the binding of the formylmethionine-tRNA to ribosomes. Seems to function along with eIF-2. This Ignicoccus hospitalis (strain KIN4/I / DSM 18386 / JCM 14125) protein is Probable translation initiation factor IF-2.